Reading from the N-terminus, the 209-residue chain is MSKVHVFDHPLIQHKLSYIRDVNTGTKEFRELVDEVGMLMAYEVTRDLELQDVDIETPVTKMTAKRLAGKKLAIVPILRAGLGMTDGILSLVPAARVGHIGLYRDPETLKAVEYFAKLPQDITERQIIVVDPMLATGASAIEAITSLKKRGAKNIRFMCLIAAPEGVEKMHEAHPDVDIYIAALDEKLNDKAYITPGLGDAGDRLFGTK.

Residues Arg79, Arg104, and 131–139 contribute to the 5-phospho-alpha-D-ribose 1-diphosphate site; that span reads DPMLATGAS. Uracil is bound by residues Ile194 and 199-201; that span reads GDA. Residue Asp200 coordinates 5-phospho-alpha-D-ribose 1-diphosphate.

This sequence belongs to the UPRTase family. Mg(2+) is required as a cofactor.

It carries out the reaction UMP + diphosphate = 5-phospho-alpha-D-ribose 1-diphosphate + uracil. The protein operates within pyrimidine metabolism; UMP biosynthesis via salvage pathway; UMP from uracil: step 1/1. Allosterically activated by GTP. Catalyzes the conversion of uracil and 5-phospho-alpha-D-ribose 1-diphosphate (PRPP) to UMP and diphosphate. The sequence is that of Uracil phosphoribosyltransferase from Staphylococcus aureus (strain JH1).